A 343-amino-acid chain; its full sequence is Anthranilate phosphoribosyltransferase (343 aa).

Residues Gly-81, 84–85 (GD), 91–94 (NLST), 109–117 (KHGNRSVSS), and Ser-121 contribute to the 5-phospho-alpha-D-ribose 1-diphosphate site. Gly-81 serves as a coordination point for anthranilate. Ser-93 lines the Mg(2+) pocket. Position 112 (Asn-112) interacts with anthranilate. Arg-167 serves as a coordination point for anthranilate. Residues Asp-226 and Glu-227 each coordinate Mg(2+).

It belongs to the anthranilate phosphoribosyltransferase family. In terms of assembly, homodimer. Mg(2+) serves as cofactor.

The catalysed reaction is N-(5-phospho-beta-D-ribosyl)anthranilate + diphosphate = 5-phospho-alpha-D-ribose 1-diphosphate + anthranilate. It participates in amino-acid biosynthesis; L-tryptophan biosynthesis; L-tryptophan from chorismate: step 2/5. Functionally, catalyzes the transfer of the phosphoribosyl group of 5-phosphorylribose-1-pyrophosphate (PRPP) to anthranilate to yield N-(5'-phosphoribosyl)-anthranilate (PRA). This chain is Anthranilate phosphoribosyltransferase, found in Cellvibrio japonicus (strain Ueda107) (Pseudomonas fluorescens subsp. cellulosa).